A 592-amino-acid chain; its full sequence is Arginine--tRNA ligase (592 aa).

The 'HIGH' region motif lies at 134 to 144 (ANPTGPLHVGH).

Belongs to the class-I aminoacyl-tRNA synthetase family. Monomer.

It is found in the cytoplasm. It carries out the reaction tRNA(Arg) + L-arginine + ATP = L-arginyl-tRNA(Arg) + AMP + diphosphate. This Coxiella burnetii (strain RSA 493 / Nine Mile phase I) protein is Arginine--tRNA ligase.